Here is a 145-residue protein sequence, read N- to C-terminus: Ribosome-binding factor A (145 aa).

Basic and acidic residues predominate over residues lysine 122–arginine 132. The segment at lysine 122 to aspartate 145 is disordered.

The protein belongs to the RbfA family. As to quaternary structure, monomer. Binds 30S ribosomal subunits, but not 50S ribosomal subunits or 70S ribosomes.

It localises to the cytoplasm. One of several proteins that assist in the late maturation steps of the functional core of the 30S ribosomal subunit. Associates with free 30S ribosomal subunits (but not with 30S subunits that are part of 70S ribosomes or polysomes). Required for efficient processing of 16S rRNA. May interact with the 5'-terminal helix region of 16S rRNA. This is Ribosome-binding factor A from Methylorubrum extorquens (strain PA1) (Methylobacterium extorquens).